The chain runs to 394 residues: Sugar efflux transporter C (394 aa).

The Periplasmic segment spans residues 1-10 (MQKTATTPSK). A helical membrane pass occupies residues 11–31 (ILDLTAAAFLLVAFLTGIAGA). Over 32–49 (LQTPTLSIFLADELKARP) the chain is Cytoplasmic. The chain crosses the membrane as a helical span at residues 50 to 70 (IMVGFFFTGSAIMGILVSQFL). Over 71 to 80 (ARHSDKQGDR) the chain is Periplasmic. Residues 81-101 (KLLILLCCLFGVLACTLFAWN) traverse the membrane as a helical segment. Residues 102–104 (RNY) are Cytoplasmic-facing. A helical transmembrane segment spans residues 105–125 (FILLSTGVLLSSFASTANPQM). At 126–150 (FALAREHADRTGRETVMFSTFLRAQ) the chain is on the periplasmic side. A helical membrane pass occupies residues 151 to 171 (ISLAWVIGPPLAYELAMGFSF). Lys-172 is a topological domain (cytoplasmic). A helical transmembrane segment spans residues 173-193 (VMYLTAAIAFVVCGLIVWLFL). Residues 194-224 (PSIQRNIPVVTQPVEILPSTHRKRDTRLLFV) are Periplasmic-facing. A helical transmembrane segment spans residues 225–245 (VCSMMWAANNLYMINMPLFII). Topologically, residues 246-253 (DELHLTDK) are cytoplasmic. The helical transmembrane segment at 254-274 (LTGEMIGIAAGLEIPMMLIAG) threads the bilayer. Topologically, residues 275 to 283 (YYMKRIGKR) are periplasmic. Residues 284-304 (LLMLIAIVSGMCFYASVLMAT) traverse the membrane as a helical segment. The Cytoplasmic portion of the chain corresponds to 305–310 (TPAVEL). A helical transmembrane segment spans residues 311 to 331 (ELQILNAIFLGILCGIGMLYF). Topologically, residues 332–370 (QDLMPEKIGSATTLYANTSRVGWIIAGSVDGIMVEIWSY) are periplasmic. The chain crosses the membrane as a helical span at residues 371-391 (HALFWLAIGMLGIAMICLLFI). The Cytoplasmic portion of the chain corresponds to 392 to 394 (KDI).

It belongs to the major facilitator superfamily. Set transporter family.

Its subcellular location is the cell inner membrane. Functionally, involved in the efflux of sugars. The physiological role may be the detoxification of non-metabolizable sugar analogs. The protein is Sugar efflux transporter C (setC) of Escherichia coli (strain K12).